A 235-amino-acid chain; its full sequence is U1 small nuclear ribonucleoprotein C (235 aa).

The Matrin-type zinc finger occupies 4–36 (YYCEYCDIYLTHSSPVGRRQHIHGRKHISAKIE). The segment at 131-235 (QAHNNYSYPN…SKEHIESDIS (105 aa)) is disordered. Over residues 134-168 (NNYSYPNSINPSNQINYSNNYGSNNFNNSNEFNKN) the composition is skewed to low complexity. Positions 169 to 189 (MNEKDNINNNDIHDNKVKTDE) are enriched in basic and acidic residues. The span at 192 to 203 (PINNDNLNNTRN) shows a compositional bias: low complexity. Composition is skewed to basic and acidic residues over residues 205 to 217 (SYEE…DHKK) and 225 to 235 (NSKEHIESDIS).

It belongs to the U1 small nuclear ribonucleoprotein C family. As to quaternary structure, U1 snRNP is composed of the 7 core Sm proteins B/B', D1, D2, D3, E, F and G that assemble in a heptameric protein ring on the Sm site of the small nuclear RNA to form the core snRNP, and at least 3 U1 snRNP-specific proteins U1-70K, U1-A and U1-C. U1-C interacts with U1 snRNA and the 5' splice-site region of the pre-mRNA.

It localises to the nucleus. Component of the spliceosomal U1 snRNP, which is essential for recognition of the pre-mRNA 5' splice-site and the subsequent assembly of the spliceosome. U1-C is directly involved in initial 5' splice-site recognition for both constitutive and regulated alternative splicing. The interaction with the 5' splice-site seems to precede base-pairing between the pre-mRNA and the U1 snRNA. Stimulates commitment or early (E) complex formation by stabilizing the base pairing of the 5' end of the U1 snRNA and the 5' splice-site region. In Plasmodium falciparum (isolate 3D7), this protein is U1 small nuclear ribonucleoprotein C.